We begin with the raw amino-acid sequence, 154 residues long: MSLIPRIFGDRRSSSMFDPFSIDVFDPFRELGFPSTNSGESSAFANTRIDWKETPEPHVFKVDLPGLKKEEVKVEVEEDRVLQISGERNVEKEDKNDKWHRMERSSGKFMRRFRLPENAKMDQVKASMENGVLTVTVPKEEVKKPEVKSIEISG.

The sHSP domain maps to 40-154 (ESSAFANTRI…PEVKSIEISG (115 aa)).

Belongs to the small heat shock protein (HSP20) family. Forms oligomeric structures.

It localises to the cytoplasm. This chain is 17.8 kDa class I heat shock protein, found in Solanum lycopersicum (Tomato).